Reading from the N-terminus, the 499-residue chain is Lipopolysaccharide core galacturonosyltransferase RgtA (499 aa).

10 helical membrane-spanning segments follow: residues 11 to 31, 74 to 94, 103 to 123, 125 to 145, 165 to 185, 199 to 219, 248 to 268, 291 to 311, 316 to 336, and 351 to 371; these read TAGL…IVLP, IGAL…FYGL, EALA…SYMA, QDLT…YGFF, IGLI…IAIL, MLAA…WLQG, LLAF…IFAA, MMLA…STTV, LDPF…AAGL, and VLMA…GLIG.

It belongs to the glycosyltransferase 83 family.

It is found in the cell inner membrane. It functions in the pathway bacterial outer membrane biogenesis; LPS core biosynthesis. In terms of biological role, involved in the modification of the lipopolysaccharide (LPS) inner core. Catalyzes the transfer of a galacturonic acid (GalA) residue to the 4-position of the outer Kdo (3-deoxy-D-manno-octulosonic acid) residue of the LPS inner core, using dodecaprenyl phosphate-GalA as the donor substrate. GalA addition by RgtA is required for RgtB activity. This chain is Lipopolysaccharide core galacturonosyltransferase RgtA, found in Rhizobium johnstonii (strain DSM 114642 / LMG 32736 / 3841) (Rhizobium leguminosarum bv. viciae).